The following is a 716-amino-acid chain: ATP-dependent zinc metalloprotease FTSH 1, chloroplastic (716 aa).

Residues 1–48 (MASNSLLRSSSNFFLGSHIIISSPTPKTTRKPSFPFSFVSRAKYQITR) constitute a chloroplast transit peptide. The N-terminal 38 residues, 49–86 (SSQDENSPNGKPNSPFSSQVALAAILLSSISSSPLALA), are a transit peptide targeting the thylakoid. A helical membrane pass occupies residues 204 to 224 (FTVIGNLIFPLLAFGGLFLLF). 302–309 (GPPGTGKT) lines the ATP pocket. Position 524 (H524) interacts with Zn(2+). E525 is a catalytic residue. Positions 528 and 605 each coordinate Zn(2+).

This sequence in the N-terminal section; belongs to the AAA ATPase family. In the C-terminal section; belongs to the peptidase M41 family. As to quaternary structure, interacts with CHIP and HSP70. Heterohexamers with FTSH2, FTSH5 and FTSH8. Zn(2+) serves as cofactor. Post-translationally, the FTSH1 precursor is ubiquitinated by CHIP in the cytoplasm. In terms of tissue distribution, ubiquitous.

The protein resides in the plastid. It localises to the chloroplast thylakoid membrane. In terms of biological role, part of a complex that function as an ATP-dependent zinc metallopeptidase. Involved in the thylakoid formation and in the removal of damaged D1 in the photosystem II, preventing cell death under high-intensity light conditions. The protein is ATP-dependent zinc metalloprotease FTSH 1, chloroplastic (FTSH1) of Arabidopsis thaliana (Mouse-ear cress).